Consider the following 372-residue polypeptide: Lipoyl synthase, mitochondrial (372 aa).

The N-terminal 27 residues, 1–27 (MSLRCGDAARTLGPRVFGRYFCSPVRP), are a transit peptide targeting the mitochondrion. [4Fe-4S] cluster-binding residues include Cys-106, Cys-111, Cys-117, Cys-137, Cys-141, Cys-144, and Ser-352. The Radical SAM core domain occupies 122–341 (EYATATATIM…EKVGNELGFH (220 aa)).

It belongs to the radical SAM superfamily. Lipoyl synthase family. [4Fe-4S] cluster is required as a cofactor.

It is found in the mitochondrion. It carries out the reaction [[Fe-S] cluster scaffold protein carrying a second [4Fe-4S](2+) cluster] + N(6)-octanoyl-L-lysyl-[protein] + 2 oxidized [2Fe-2S]-[ferredoxin] + 2 S-adenosyl-L-methionine + 4 H(+) = [[Fe-S] cluster scaffold protein] + N(6)-[(R)-dihydrolipoyl]-L-lysyl-[protein] + 4 Fe(3+) + 2 hydrogen sulfide + 2 5'-deoxyadenosine + 2 L-methionine + 2 reduced [2Fe-2S]-[ferredoxin]. It functions in the pathway protein modification; protein lipoylation via endogenous pathway; protein N(6)-(lipoyl)lysine from octanoyl-[acyl-carrier-protein]: step 2/2. Functionally, catalyzes the radical-mediated insertion of two sulfur atoms into the C-6 and C-8 positions of the octanoyl moiety bound to the lipoyl domains of lipoate-dependent enzymes, thereby converting the octanoylated domains into lipoylated derivatives. In Homo sapiens (Human), this protein is Lipoyl synthase, mitochondrial.